A 216-amino-acid chain; its full sequence is Probable phosphatase SPAC513.02 (216 aa).

His15 (tele-phosphohistidine intermediate) is an active-site residue.

Belongs to the phosphoglycerate mutase family. BPG-dependent PGAM subfamily.

It localises to the cytoplasm. Its subcellular location is the nucleus. This is Probable phosphatase SPAC513.02 from Schizosaccharomyces pombe (strain 972 / ATCC 24843) (Fission yeast).